The sequence spans 263 residues: uncharacterized protein (263 aa).

31–38 (GPTGSGKT) serves as a coordination point for ATP.

The protein belongs to the CbbQ/NirQ/NorQ/GpvN family.

This is an uncharacterized protein from Staphylococcus aureus (strain bovine RF122 / ET3-1).